The chain runs to 515 residues: Nectin-1 (515 aa).

The signal sequence occupies residues 1–30; the sequence is MARMGLAGAAGRWWGLALGLTAFFLPGAHT. The 111-residue stretch at 31–141 folds into the Ig-like V-type domain; the sequence is QVVQVNDSMY…GNRESQLNLT (111 aa). Residues 31 to 355 lie on the Extracellular side of the membrane; that stretch reads QVVQVNDSMY…GRRAGQVPTA (325 aa). 8 N-linked (GlcNAc...) asparagine glycosylation sites follow: Asn-36, Asn-72, Asn-139, Asn-202, Asn-286, Asn-297, Asn-307, and Asn-332. A disulfide bridge links Cys-51 with Cys-124. 2 consecutive Ig-like C2-type domains span residues 145 to 243 and 247 to 334; these read KPTN…TLNV and PEVT…VNIT. 2 disulfide bridges follow: Cys-172–Cys-226 and Cys-269–Cys-316. Residues 282 to 299 are interaction with FGFR; sequence WTTLNGSLPKGVEAQNRT. A helical transmembrane segment spans residues 356 to 376; that stretch reads IIGGVVGSILLVLFVVGGIVV. Residues 377–515 lie on the Cytoplasmic side of the membrane; sequence ALCRRRHTFK…SFISKKEWYV (139 aa). Residues 400–486 are disordered; sequence YSKAGIPQHH…DGYGDRTLGY (87 aa). Phosphoserine occurs at positions 422, 434, and 435. A Phosphotyrosine modification is found at Tyr-436. The span at 436-445 shows a compositional bias: acidic residues; sequence YEEEEEEEGG. Basic and acidic residues predominate over residues 446–464; the sequence is GGERKVGGPHPKYDEDAKR. A Phosphoserine modification is found at Ser-509.

Belongs to the nectin family. (Microbial infection) Interacts with herpes pseudorabies virus/PRV envelope glycoprotein D.

It is found in the cell membrane. Its subcellular location is the cell junction. The protein resides in the adherens junction. The protein localises to the presynaptic cell membrane. Its function is as follows. (Microbial infection) Acts as a receptor for herpes simplex virus 1/HHV-1, herpes simplex virus 2/HHV-2, and pseudorabies virus/PRV. This is Nectin-1 from Sus scrofa (Pig).